Consider the following 136-residue polypeptide: Protein PsiE (136 aa).

The next 4 membrane-spanning stretches (helical) occupy residues 15-35 (ILQT…VVFL), 55-75 (YELV…ALIV), 82-102 (FHFP…RLII), and 108-128 (PLDV…LWLC).

This sequence belongs to the PsiE family.

The protein localises to the cell inner membrane. This is Protein PsiE from Escherichia coli (strain UTI89 / UPEC).